A 143-amino-acid polypeptide reads, in one-letter code: Transcriptional regulator MraZ (143 aa).

SpoVT-AbrB domains lie at 5–47 and 76–119; these read EYQH…PMSE and ATEC…SKEI.

The protein belongs to the MraZ family. Forms oligomers.

The protein localises to the cytoplasm. It is found in the nucleoid. In Bacillus licheniformis (strain ATCC 14580 / DSM 13 / JCM 2505 / CCUG 7422 / NBRC 12200 / NCIMB 9375 / NCTC 10341 / NRRL NRS-1264 / Gibson 46), this protein is Transcriptional regulator MraZ.